The chain runs to 116 residues: Large ribosomal subunit protein uL18 (116 aa).

It belongs to the universal ribosomal protein uL18 family. In terms of assembly, part of the 50S ribosomal subunit; part of the 5S rRNA/L5/L18/L25 subcomplex. Contacts the 5S and 23S rRNAs.

Its function is as follows. This is one of the proteins that bind and probably mediate the attachment of the 5S RNA into the large ribosomal subunit, where it forms part of the central protuberance. The protein is Large ribosomal subunit protein uL18 of Hahella chejuensis (strain KCTC 2396).